Consider the following 290-residue polypeptide: Syntaxin (290 aa).

The interval 1 to 22 (MTKDRLAALKAAQSDDDDNDDV) is disordered. The Cytoplasmic segment spans residues 1–267 (MTKDRLAALK…KYQSKARRKK (267 aa)). A coiled-coil region spans residues 32 to 114 (MEEFFEQVDE…EEHTNKSSAD (83 aa)). One can recognise a t-SNARE coiled-coil homology domain in the interval 194 to 256 (LADIEARHND…ETAKMDTKKA (63 aa)). A helical; Anchor for type IV membrane protein transmembrane segment spans residues 268–288 (IMILVCLAILIIILVGVIGGT). The Extracellular portion of the chain corresponds to 289-290 (LG).

The protein belongs to the syntaxin family.

It is found in the membrane. Potentially involved in docking of synaptic vesicles at presynaptic active zones. This is Syntaxin from Aplysia californica (California sea hare).